Consider the following 503-residue polypeptide: Aromatase (503 aa).

2 helical membrane passes run 19 to 39 and 53 to 73; these read EVVP…LLVW and FLGI…IGSA. 2 residues coordinate substrate: aspartate 309 and methionine 374. Residue cysteine 437 participates in heme binding.

It belongs to the cytochrome P450 family. The cofactor is heme.

The protein localises to the endoplasmic reticulum membrane. It localises to the microsome membrane. The enzyme catalyses testosterone + 3 reduced [NADPH--hemoprotein reductase] + 3 O2 = 17beta-estradiol + formate + 3 oxidized [NADPH--hemoprotein reductase] + 4 H2O + 4 H(+). The catalysed reaction is androst-4-ene-3,17-dione + 3 reduced [NADPH--hemoprotein reductase] + 3 O2 = estrone + formate + 3 oxidized [NADPH--hemoprotein reductase] + 4 H2O + 4 H(+). It catalyses the reaction androst-4-ene-3,17-dione + reduced [NADPH--hemoprotein reductase] + O2 = 19-hydroxyandrost-4-ene-3,17-dione + oxidized [NADPH--hemoprotein reductase] + H2O + H(+). It carries out the reaction 19-hydroxyandrost-4-ene-3,17-dione + reduced [NADPH--hemoprotein reductase] + O2 = 19-oxo-androst-4-ene-3,17-dione + oxidized [NADPH--hemoprotein reductase] + 2 H2O + H(+). The enzyme catalyses 19-oxo-androst-4-ene-3,17-dione + reduced [NADPH--hemoprotein reductase] + O2 = estrone + formate + oxidized [NADPH--hemoprotein reductase] + H2O + 2 H(+). The catalysed reaction is estrone + reduced [NADPH--hemoprotein reductase] + O2 = 2-hydroxyestrone + oxidized [NADPH--hemoprotein reductase] + H2O + H(+). It catalyses the reaction 17beta-hydroxy-5alpha-androstan-3-one + reduced [NADPH--hemoprotein reductase] + O2 = 17beta,19-dihydroxy-3-oxo-5alpha-androstanone + oxidized [NADPH--hemoprotein reductase] + H2O + H(+). It carries out the reaction 17beta,19-dihydroxy-3-oxo-5alpha-androstanone + reduced [NADPH--hemoprotein reductase] + O2 = 17beta-hydroxy-3,19-dioxo-5alpha-androstanone + oxidized [NADPH--hemoprotein reductase] + 2 H2O + H(+). The enzyme catalyses 17beta-hydroxy-3,19-dioxo-5alpha-androstanone + reduced [NADPH--hemoprotein reductase] + O2 = 17beta-hydroxy-3-oxo-19-nor-5alpha-androst-1-ene + formate + oxidized [NADPH--hemoprotein reductase] + H2O + 2 H(+). The protein operates within steroid hormone biosynthesis. In terms of biological role, a cytochrome P450 monooxygenase that catalyzes the conversion of C19 androgens, androst-4-ene-3,17-dione (androstenedione) and testosterone to the C18 estrogens, estrone and estradiol, respectively. Catalyzes three successive oxidations of C19 androgens: two conventional oxidations at C19 yielding 19-hydroxy and 19-oxo/19-aldehyde derivatives, followed by a third oxidative aromatization step that involves C1-beta hydrogen abstraction combined with cleavage of the C10-C19 bond to yield a phenolic A ring and formic acid. Alternatively, the third oxidative reaction yields a 19-norsteroid and formic acid. Converts dihydrotestosterone to delta1,10-dehydro 19-nordihydrotestosterone and may play a role in homeostasis of this potent androgen. Also displays 2-hydroxylase activity toward estrone. Mechanistically, uses molecular oxygen inserting one oxygen atom into a substrate, and reducing the second into a water molecule, with two electrons provided by NADPH via cytochrome P450 reductase (CPR; NADPH-ferrihemoprotein reductase). The chain is Aromatase (CYP19A1) from Bos taurus (Bovine).